The chain runs to 141 residues: Large ribosomal subunit protein uL11 (141 aa).

It belongs to the universal ribosomal protein uL11 family. As to quaternary structure, part of the ribosomal stalk of the 50S ribosomal subunit. Interacts with L10 and the large rRNA to form the base of the stalk. L10 forms an elongated spine to which L12 dimers bind in a sequential fashion forming a multimeric L10(L12)X complex. Post-translationally, one or more lysine residues are methylated.

Functionally, forms part of the ribosomal stalk which helps the ribosome interact with GTP-bound translation factors. The sequence is that of Large ribosomal subunit protein uL11 from Chlorobium phaeobacteroides (strain BS1).